Reading from the N-terminus, the 366-residue chain is tRNA/tmRNA (uracil-C(5))-methyltransferase (366 aa).

Positions 190, 218, 223, 239, and 299 each coordinate S-adenosyl-L-methionine. Residue Cys-324 is the Nucleophile of the active site. Glu-358 serves as the catalytic Proton acceptor.

It belongs to the class I-like SAM-binding methyltransferase superfamily. RNA M5U methyltransferase family. TrmA subfamily.

The catalysed reaction is uridine(54) in tRNA + S-adenosyl-L-methionine = 5-methyluridine(54) in tRNA + S-adenosyl-L-homocysteine + H(+). It carries out the reaction uridine(341) in tmRNA + S-adenosyl-L-methionine = 5-methyluridine(341) in tmRNA + S-adenosyl-L-homocysteine + H(+). Its function is as follows. Dual-specificity methyltransferase that catalyzes the formation of 5-methyluridine at position 54 (m5U54) in all tRNAs, and that of position 341 (m5U341) in tmRNA (transfer-mRNA). This Salmonella choleraesuis (strain SC-B67) protein is tRNA/tmRNA (uracil-C(5))-methyltransferase.